A 424-amino-acid polypeptide reads, in one-letter code: SNF1-related protein kinase regulatory subunit gamma-1 (424 aa).

At Ala2 the chain carries N-acetylalanine. Ser44 is subject to Phosphoserine. 4 consecutive CBS domains span residues 63 to 131, 185 to 244, 263 to 324, and 350 to 408; these read LSSD…EPPS, TFRW…CAGL, MSKD…YHDY, and IMSG…SGYF.

The protein belongs to the 5'-AMP-activated protein kinase gamma subunit family. In terms of assembly, subunit of a probable heterotrimeric complex consisting of an alpha catalytic (KIN10 or KIN11) subunit, and a beta (KINB) and a gamma (KING or SNF4) non-catalytic regulatory subunits. Interacts with HXK1 in mitochondrion. In terms of processing, sumoylated by SIZ1. Expressed in vegetative organs and, to lower extent, in reproductive organs.

The protein resides in the mitochondrion. Regulatory subunit of the probable trimeric SNF1-related protein kinase (SnRK) complex, which may play a role in a signal transduction cascade regulating gene expression and carbohydrate metabolism in higher plants. The SnRK complex may also be involved in the regulation of fatty acid synthesis by phosphorylation of acetyl-CoA carboxylase and in assimilation of nitrogen by phosphorylating nitrate reductase. In Arabidopsis thaliana (Mouse-ear cress), this protein is SNF1-related protein kinase regulatory subunit gamma-1 (KING1).